The primary structure comprises 451 residues: Chromosomal replication initiator protein DnaA (451 aa).

A domain I, interacts with DnaA modulators region spans residues 1–93 (MENIDDLWNK…HNQEEEALPE (93 aa)). The segment at 88 to 108 (EEALPEQTPQTPPEKDVAGQS) is disordered. Residues 94–113 (QTPQTPPEKDVAGQSTLSQT) are domain II. The tract at residues 114–330 (MLNDKYTFNT…GALIRVVAYS (217 aa)) is domain III, AAA+ region. 4 residues coordinate ATP: glycine 158, glycine 160, lysine 161, and threonine 162. Positions 331-451 (SLINQDMNAD…VQAITEQLRQ (121 aa)) are domain IV, binds dsDNA.

Belongs to the DnaA family. In terms of assembly, oligomerizes as a right-handed, spiral filament on DNA at oriC.

Its subcellular location is the cytoplasm. Plays an essential role in the initiation and regulation of chromosomal replication. ATP-DnaA binds to the origin of replication (oriC) to initiate formation of the DNA replication initiation complex once per cell cycle. Binds the DnaA box (a 9 base pair repeat at the origin) and separates the double-stranded (ds)DNA. Forms a right-handed helical filament on oriC DNA; dsDNA binds to the exterior of the filament while single-stranded (ss)DNA is stabiized in the filament's interior. The ATP-DnaA-oriC complex binds and stabilizes one strand of the AT-rich DNA unwinding element (DUE), permitting loading of DNA polymerase. After initiation quickly degrades to an ADP-DnaA complex that is not apt for DNA replication. Binds acidic phospholipids. This is Chromosomal replication initiator protein DnaA from Shouchella clausii (strain KSM-K16) (Alkalihalobacillus clausii).